Consider the following 369-residue polypeptide: MKSGRFIGVMSGTSLDGVDVVLATIDEHRVAQLASLSWPIPVSLKQAVLDICQGQQLTLSQFGQLDTQLGRLFADAVNALLKEQNLQARDIVAIGCHGQAVWHEPTGVAPHTLQIGDNNQIVARTGITVVGDFRRRDIALGGQGAPLVPAFHHALLAHSTERRMVLNIGGIANLSLLIPGQPVGGYDTGPGNMLMDAWIWRQAGKPYDKDAEWARAGKVILPLLQNMLSDPYFSQPAPKSTGREYFNYGWLERHLRHFPGVDPRDVQATLAELTAVTISEQVLLSGGCERLMVCGGGSRNPLLMARLAALLPGTEVTTTDAVGISGDDMEALAFAWLAWRTLAGLPGNLPSVTGASQETVLGAIFPANP.

12-19 (GTSLDGVD) is a binding site for ATP.

This sequence belongs to the anhydro-N-acetylmuramic acid kinase family.

It carries out the reaction 1,6-anhydro-N-acetyl-beta-muramate + ATP + H2O = N-acetyl-D-muramate 6-phosphate + ADP + H(+). It participates in amino-sugar metabolism; 1,6-anhydro-N-acetylmuramate degradation. It functions in the pathway cell wall biogenesis; peptidoglycan recycling. Functionally, catalyzes the specific phosphorylation of 1,6-anhydro-N-acetylmuramic acid (anhMurNAc) with the simultaneous cleavage of the 1,6-anhydro ring, generating MurNAc-6-P. Is required for the utilization of anhMurNAc either imported from the medium or derived from its own cell wall murein, and thus plays a role in cell wall recycling. This is Anhydro-N-acetylmuramic acid kinase from Escherichia coli O139:H28 (strain E24377A / ETEC).